The sequence spans 210 residues: Probable nicotinate-nucleotide adenylyltransferase (210 aa).

It belongs to the NadD family.

The enzyme catalyses nicotinate beta-D-ribonucleotide + ATP + H(+) = deamido-NAD(+) + diphosphate. It participates in cofactor biosynthesis; NAD(+) biosynthesis; deamido-NAD(+) from nicotinate D-ribonucleotide: step 1/1. In terms of biological role, catalyzes the reversible adenylation of nicotinate mononucleotide (NaMN) to nicotinic acid adenine dinucleotide (NaAD). This is Probable nicotinate-nucleotide adenylyltransferase from Streptococcus pyogenes serotype M1.